The sequence spans 237 residues: Putative biotin ligase (237 aa).

Residues 1 to 191 form the BPL/LPL catalytic domain; that stretch reads MEIIHLSEID…KKYKKYSITI (191 aa).

This sequence belongs to the biotin--protein ligase family.

It carries out the reaction biotin + L-lysyl-[protein] + ATP = N(6)-biotinyl-L-lysyl-[protein] + AMP + diphosphate + H(+). This is Putative biotin ligase from Methanocaldococcus jannaschii (strain ATCC 43067 / DSM 2661 / JAL-1 / JCM 10045 / NBRC 100440) (Methanococcus jannaschii).